The primary structure comprises 375 residues: Sulfite efflux pump SSU1 (375 aa).

The Cytoplasmic segment spans residues 1–25 (MPSGSGFHNIEEAGEKARKRDDWIA). The chain crosses the membrane as a helical span at residues 26–46 (ISNFHPGWFSVNMGTGITAIL). Topologically, residues 47–59 (LQNLPYQFPGLHY) are extracellular. The chain crosses the membrane as a helical span at residues 60-80 (IAVILFILNVIIFFLFLTISI). The Cytoplasmic portion of the chain corresponds to 81–101 (TRYCLWPDKFKAMLAHPAHSM). Residues 102-122 (LLGTFPMGFATIINCIVFICV) form a helical membrane-spanning segment. Residues 123–135 (PVWGEWASRFAWG) are Extracellular-facing. The helical transmembrane segment at 136–156 (LWWIDAAVSVAICYFVPFMLM) threads the bilayer. At 157 to 167 (TKHTSSLETMT) the chain is on the cytoplasmic side. A helical transmembrane segment spans residues 168 to 188 (AAWLLPIVAPVVAAASGGVVA). The Extracellular portion of the chain corresponds to 189–200 (DSLQNDTHALIT). An N-linked (GlcNAc...) asparagine glycan is attached at asparagine 193. Residues 201-221 (ILVCYVMWGSAVPLAMVILVI) form a helical membrane-spanning segment. Over 222–234 (YFQRLAIHKLVPR) the chain is Cytoplasmic. The chain crosses the membrane as a helical span at residues 235–255 (AAIVSALLPIGPLGQGGFGLM). Over 256–277 (QLGVVAKRVFPRLDFLAPIAGD) the chain is Extracellular. Residues 278–298 (IFYVMGAFIAMIMWGFGLIWL) form a helical membrane-spanning segment. The Cytoplasmic portion of the chain corresponds to 299–309 (WFALASFTRGK). A helical membrane pass occupies residues 310–330 (FYFNIGWWAFTFPLGVFTTAT). The Extracellular portion of the chain corresponds to 331–343 (TQMGKEFNSPFFD). A helical transmembrane segment spans residues 344–364 (ILGTFFSIVVTCMWVLVFALT). The Cytoplasmic portion of the chain corresponds to 365–375 (VYKSCTKELFR).

The protein belongs to the tellurite-resistance/dicarboxylate transporter (TDT) family.

It localises to the cell membrane. Sulphite efflux pump required for the secretion of sulphite as a reducing agent. In the presence of sulphite, cystine in keratin is directly cleaved to cysteine and S-sulphocysteine, and thereby, reduced proteins become accessible to hydrolysis by a variety of secreted endo- and exoproteases. Excretion of sulphite mediated by an efflux pump also represents a detoxification pathway for dermatophytes during infection of the epidermal stratum corneum, hair and nails, which are rich in cysteine. This is Sulfite efflux pump SSU1 from Arthroderma benhamiae (strain ATCC MYA-4681 / CBS 112371) (Trichophyton mentagrophytes).